The primary structure comprises 279 residues: 3-methyl-2-oxobutanoate hydroxymethyltransferase (279 aa).

2 residues coordinate Mg(2+): Asp-44 and Asp-83. 3-methyl-2-oxobutanoate-binding positions include 44–45 (DS), Asp-83, and Lys-113. Glu-115 contributes to the Mg(2+) binding site. The active-site Proton acceptor is Glu-182.

This sequence belongs to the PanB family. In terms of assembly, homodecamer; pentamer of dimers. Mg(2+) is required as a cofactor.

Its subcellular location is the cytoplasm. The catalysed reaction is 3-methyl-2-oxobutanoate + (6R)-5,10-methylene-5,6,7,8-tetrahydrofolate + H2O = 2-dehydropantoate + (6S)-5,6,7,8-tetrahydrofolate. Its pathway is cofactor biosynthesis; (R)-pantothenate biosynthesis; (R)-pantoate from 3-methyl-2-oxobutanoate: step 1/2. Functionally, catalyzes the reversible reaction in which hydroxymethyl group from 5,10-methylenetetrahydrofolate is transferred onto alpha-ketoisovalerate to form ketopantoate. The protein is 3-methyl-2-oxobutanoate hydroxymethyltransferase of Dehalococcoides mccartyi (strain ATCC BAA-2100 / JCM 16839 / KCTC 5957 / BAV1).